The sequence spans 630 residues: Pentatricopeptide repeat-containing protein At1g63130, mitochondrial (630 aa).

The transit peptide at 1 to 22 (MRRLFAISSTGNRFVHRSLLGK) directs the protein to the mitochondrion. PPR repeat units lie at residues 80-114 (SIVEFSKLLSAIAKMNKFDLVISLGEQMQNLGISH), 115-149 (NLYTYSILINCFCRRSQLSLALAVLAKMMKLGYEP), 150-184 (DIVTLNSLLNGFCHGNRISDAVSLVGQMVEMGYQP), 185-219 (DSFTFNTLIHGLFRHNRASEAVALVDRMVVKGCQP), 220-254 (DLVTYGIVVNGLCKRGDIDLALSLLKKMEQGKIEP), 255-289 (GVVIYNTIIDALCNYKNVNDALNLFTEMDNKGIRP), 290-324 (NVVTYNSLIRCLCNYGRWSDASRLLSDMIERKINP), 325-359 (NVVTFSALIDAFVKEGKLVEAEKLYDEMIKRSIDP), 360-394 (DIFTYSSLINGFCMHDRLDEAKHMFELMISKDCFP), 395-429 (NVVTYNTLIKGFCKAKRVDEGMELFREMSQRGLVG), 430-464 (NTVTYTTLIHGFFQARECDNAQIVFKQMVSDGVLP), 465-499 (DIMTYSILLDGLCNNGKVETALVVFEYLQRSKMEP), 500-534 (DIYTYNIMIEGMCKAGKVEDGWDLFCSLSLKGVKP), 535-569 (NVVTYTTMMSGFCRKGLKEEADALFREMKEEGPLP), and 570-604 (DSGTYNTLIRAHLRDGDKAASAELIREMRSCRFVG).

The protein belongs to the PPR family. P subfamily.

The protein resides in the mitochondrion. In Arabidopsis thaliana (Mouse-ear cress), this protein is Pentatricopeptide repeat-containing protein At1g63130, mitochondrial.